The sequence spans 406 residues: Probable tRNA sulfurtransferase (406 aa).

Residues 60-166 (EPVMERLKQV…LNGIYLTSAK (107 aa)) form the THUMP domain. Residues 184 to 185 (ML), 209 to 210 (HF), Arg-266, Gly-288, and Gln-297 contribute to the ATP site.

Belongs to the ThiI family.

The protein localises to the cytoplasm. It carries out the reaction [ThiI sulfur-carrier protein]-S-sulfanyl-L-cysteine + a uridine in tRNA + 2 reduced [2Fe-2S]-[ferredoxin] + ATP + H(+) = [ThiI sulfur-carrier protein]-L-cysteine + a 4-thiouridine in tRNA + 2 oxidized [2Fe-2S]-[ferredoxin] + AMP + diphosphate. The enzyme catalyses [ThiS sulfur-carrier protein]-C-terminal Gly-Gly-AMP + S-sulfanyl-L-cysteinyl-[cysteine desulfurase] + AH2 = [ThiS sulfur-carrier protein]-C-terminal-Gly-aminoethanethioate + L-cysteinyl-[cysteine desulfurase] + A + AMP + 2 H(+). It functions in the pathway cofactor biosynthesis; thiamine diphosphate biosynthesis. Functionally, catalyzes the ATP-dependent transfer of a sulfur to tRNA to produce 4-thiouridine in position 8 of tRNAs, which functions as a near-UV photosensor. Also catalyzes the transfer of sulfur to the sulfur carrier protein ThiS, forming ThiS-thiocarboxylate. This is a step in the synthesis of thiazole, in the thiamine biosynthesis pathway. The sulfur is donated as persulfide by IscS. The sequence is that of Probable tRNA sulfurtransferase from Limosilactobacillus fermentum (strain NBRC 3956 / LMG 18251) (Lactobacillus fermentum).